Reading from the N-terminus, the 459-residue chain is ATP synthase subunit beta (459 aa).

148–155 (GGAGVGKT) is an ATP binding site.

It belongs to the ATPase alpha/beta chains family. F-type ATPases have 2 components, CF(1) - the catalytic core - and CF(0) - the membrane proton channel. CF(1) has five subunits: alpha(3), beta(3), gamma(1), delta(1), epsilon(1). CF(0) has three main subunits: a(1), b(2) and c(9-12). The alpha and beta chains form an alternating ring which encloses part of the gamma chain. CF(1) is attached to CF(0) by a central stalk formed by the gamma and epsilon chains, while a peripheral stalk is formed by the delta and b chains.

The protein resides in the cell inner membrane. It carries out the reaction ATP + H2O + 4 H(+)(in) = ADP + phosphate + 5 H(+)(out). Produces ATP from ADP in the presence of a proton gradient across the membrane. The catalytic sites are hosted primarily by the beta subunits. In Hahella chejuensis (strain KCTC 2396), this protein is ATP synthase subunit beta.